A 266-amino-acid chain; its full sequence is 15-hydroxyprostaglandin dehydrogenase [NAD(+)] (266 aa).

NAD(+) is bound by residues 12–20 (GAAQGIGRA), 36–37 (DW), 63–65 (CDV), and Asn-91. Positions 138 and 148 each coordinate substrate. The Proton acceptor role is filled by Tyr-151. NAD(+)-binding positions include 151 to 155 (YCASK) and 186 to 188 (VDT).

Belongs to the short-chain dehydrogenases/reductases (SDR) family. As to quaternary structure, homodimer.

It localises to the cytoplasm. The enzyme catalyses prostaglandin E2 + NAD(+) = 15-oxoprostaglandin E2 + NADH + H(+). It catalyses the reaction (15S)-hydroxy-(5Z,8Z,11Z,13E)-eicosatetraenoate + NAD(+) = 15-oxo-(5Z,8Z,11Z,13E)-eicosatetraenoate + NADH + H(+). The catalysed reaction is (11R)-hydroxy-(5Z,8Z,12E,14Z)-eicosatetraenoate + NAD(+) = 11-oxo-(5Z,8Z,12E,14Z)-eicosatetraenoate + NADH + H(+). It carries out the reaction lipoxin A4 + NAD(+) = 15-oxo-(5S,6R)-dihydroxy-(7E,9E,11Z,13E)-eicosatetraenoate + NADH + H(+). The enzyme catalyses 15-oxo-(5S,6R)-dihydroxy-(7E,9E,11Z)-eicosatrienoate + NADH + H(+) = (5S,6R,15S)-trihydroxy-(7E,9E,11Z)-eicosatrienoate + NAD(+). It catalyses the reaction prostaglandin A1 + NAD(+) = 15-oxo-prostaglandin A1 + NADH + H(+). The catalysed reaction is prostaglandin E1 + NAD(+) = 15-oxoprostaglandin E1 + NADH + H(+). It carries out the reaction 14-hydroxy-(4Z,7Z,10Z,12E,16Z,19Z)-docosahexaenoate + NAD(+) = 14-oxo-(4Z,7Z,10Z,12E,16Z,19Z)-docosahexaenoate + NADH + H(+). The enzyme catalyses resolvin E1 + NAD(+) = 18-oxo-resolvin E1 + NADH + H(+). It catalyses the reaction resolvin D1 + NAD(+) = 8-oxoresolvin D1 + NADH + H(+). The catalysed reaction is resolvin D1 + NAD(+) = 17-oxoresolvin D1 + NADH + H(+). It carries out the reaction resolvin D2 + NAD(+) = 7-oxoresolvin D2 + NADH + H(+). The enzyme catalyses resolvin D2 + NAD(+) = 16-oxoresolvin D2 + NADH + H(+). Its function is as follows. Catalyzes the NAD-dependent dehydrogenation (oxidation) of a broad array of hydroxylated polyunsaturated fatty acids (mainly eicosanoids and docosanoids, including prostaglandins, lipoxins and resolvins), yielding their corresponding keto (oxo) metabolites. Decreases the levels of the pro-proliferative prostaglandins such as prostaglandin E2 (whose activity is increased in cancer because of an increase in the expression of cyclooxygenase 2) and generates oxo-fatty acid products that can profoundly influence cell function by abrogating pro-inflammatory cytokine expression. Converts resolvins E1, D1 and D2 to their oxo products, which represents a mode of resolvin inactivation. Resolvin E1 plays important roles during the resolution phase of acute inflammation, while resolvins D1 and D2 have a unique role in obesity-induced adipose inflammation. The polypeptide is 15-hydroxyprostaglandin dehydrogenase [NAD(+)] (HPGD) (Bos taurus (Bovine)).